A 453-amino-acid chain; its full sequence is Frizzled/smoothened-like sans CRD protein G (453 aa).

Residues 1-24 form the signal peptide; the sequence is MIYILKNFIIILFFLLIILKRIES. Residues 25-89 lie on the Extracellular side of the membrane; sequence QSLPSLPSPT…PFFTLDEWNK (65 aa). Asn49 and Asn67 each carry an N-linked (GlcNAc...) asparagine glycan. A helical membrane pass occupies residues 90 to 110; the sequence is FLYMSLVMGTISFLCGLFLLI. Residues 111–124 are Cytoplasmic-facing; it reads TYSPIVNKTHNRHT. Residues 125–145 traverse the membrane as a helical segment; the sequence is IGVMCMSFGVCLAMCSDMWNF. The Extracellular portion of the chain corresponds to 146 to 170; that stretch reads GSNFTDQKSICPSPGQYLTTSNSRC. An N-linked (GlcNAc...) asparagine glycan is attached at Asn148. A helical membrane pass occupies residues 171 to 191; the sequence is LGSGIVLQFGGVFGFLNWTLL. Residues 192–209 lie on the Cytoplasmic side of the membrane; that stretch reads SFDLFMNIKGIITKNYDK. A helical membrane pass occupies residues 210–230; the sequence is YYFVATFIIAIIFTFVPIVND. The Extracellular segment spans residues 231–250; the sequence is QYSMSYIGLGCWLGSAVYQL. A helical transmembrane segment spans residues 251–271; the sequence is IFFWILLSICLIVSSVFIILI. Topologically, residues 272–296 are cytoplasmic; that stretch reads LKEIYIIIKQSKQKTSLKGNIRPLL. Residues 297–317 form a helical membrane-spanning segment; it reads CITVTSFAFFYMFFYYISIVI. The Extracellular segment spans residues 318–352; sequence EGDYYERILNEYTDCLMDPTKDVSECKFPRMSVAN. Residues 353–373 traverse the membrane as a helical segment; it reads EFVFLLCLRLLGIGAFIFYGI. The Cytoplasmic portion of the chain corresponds to 374-453; that stretch reads NKEVKKIWLN…DDNFKPIIIK (80 aa).

Belongs to the G-protein coupled receptor Fz/Smo family.

It is found in the membrane. This Dictyostelium discoideum (Social amoeba) protein is Frizzled/smoothened-like sans CRD protein G (fscG).